A 166-amino-acid polypeptide reads, in one-letter code: Phosphopantetheine adenylyltransferase (166 aa).

A substrate-binding site is contributed by serine 9. ATP-binding positions include 9–10 (SY) and histidine 17. Positions 41, 75, and 89 each coordinate substrate. ATP is bound by residues 90–92 (GLR), glutamate 100, and 124–130 (LEHISSS).

Belongs to the bacterial CoaD family. Homohexamer. It depends on Mg(2+) as a cofactor.

Its subcellular location is the cytoplasm. It carries out the reaction (R)-4'-phosphopantetheine + ATP + H(+) = 3'-dephospho-CoA + diphosphate. It functions in the pathway cofactor biosynthesis; coenzyme A biosynthesis; CoA from (R)-pantothenate: step 4/5. Its function is as follows. Reversibly transfers an adenylyl group from ATP to 4'-phosphopantetheine, yielding dephospho-CoA (dPCoA) and pyrophosphate. This Bifidobacterium longum (strain DJO10A) protein is Phosphopantetheine adenylyltransferase.